Reading from the N-terminus, the 431-residue chain is Mothers against decapentaplegic homolog 6 (431 aa).

Positions 1–15 (MFRSKRSGLVRRLWR) are enriched in basic residues. A disordered region spans residues 1–95 (MFRSKRSGLV…SPPGPGGGEA (95 aa)). Residues 29–38 (GQSSERNATA) are compositionally biased toward polar residues. The span at 71 to 90 (PELPPPPPPPPPGGASPPGP) shows a compositional bias: pro residues. In terms of domain architecture, MH1 spans 85–209 (ASPPGPGGGE…FSRLCGPESP (125 aa)). The Zn(2+) site is built by C139, C182, C194, and H199. The span at 235–245 (TETEATNSPNV) shows a compositional bias: polar residues. The tract at residues 235 to 258 (TETEATNSPNVTPGEFSDASTSPD) is disordered. One can recognise an MH2 domain in the interval 265 to 431 (WCNVAYWEHR…WLEILLSNNR (167 aa)).

Belongs to the dwarfin/SMAD family. In terms of tissue distribution, developing heart, eyes and limbs.

The protein resides in the nucleus. Its function is as follows. Transforming growth factor-beta superfamily receptors signaling occurs through the Smad family of intracellular mediators. SMAD6 is an inhibitory Smad (i-Smad) that negatively regulates signaling downstream of type I transforming growth factor-beta. Acts as a mediator of TGF-beta and BMP anti-inflammatory activities. Suppresses IL1R-TLR signaling through its direct interaction with PEL1, preventing NF-kappa-B activation, nuclear transport and NF-kappa-B-mediated expression of pro-inflammatory genes. Blocks the BMP-SMAD1 signaling pathway by competing with SMAD4 for receptor-activated SMAD1-binding. Binds to regulatory elements in target promoter regions. This is Mothers against decapentaplegic homolog 6 (SMAD6) from Gallus gallus (Chicken).